Reading from the N-terminus, the 418-residue chain is S-adenosylmethionine synthase (418 aa).

Residue His-16 coordinates ATP. Residue Asp-18 participates in Mg(2+) binding. K(+) is bound at residue Glu-44. L-methionine is bound by residues Glu-57 and Gln-100. The segment at 100 to 110 (QSPDISQGVTK) is flexible loop. Residues 175–177 (DGK), 251–252 (KF), Asp-260, 266–267 (RK), Ala-283, and Lys-287 each bind ATP. Residue Asp-260 coordinates L-methionine. An L-methionine-binding site is contributed by Lys-291.

Belongs to the AdoMet synthase family. As to quaternary structure, homotetramer; dimer of dimers. The cofactor is Mg(2+). Requires K(+) as cofactor.

The protein resides in the cytoplasm. The enzyme catalyses L-methionine + ATP + H2O = S-adenosyl-L-methionine + phosphate + diphosphate. Its pathway is amino-acid biosynthesis; S-adenosyl-L-methionine biosynthesis; S-adenosyl-L-methionine from L-methionine: step 1/1. Catalyzes the formation of S-adenosylmethionine (AdoMet) from methionine and ATP. The overall synthetic reaction is composed of two sequential steps, AdoMet formation and the subsequent tripolyphosphate hydrolysis which occurs prior to release of AdoMet from the enzyme. The polypeptide is S-adenosylmethionine synthase (Gloeothece citriformis (strain PCC 7424) (Cyanothece sp. (strain PCC 7424))).